Reading from the N-terminus, the 219-residue chain is Small ribosomal subunit protein uS3 (219 aa).

In terms of domain architecture, KH type-2 spans Ile-38–Lys-106.

Belongs to the universal ribosomal protein uS3 family. In terms of assembly, part of the 30S ribosomal subunit. Forms a tight complex with proteins S10 and S14.

Its function is as follows. Binds the lower part of the 30S subunit head. Binds mRNA in the 70S ribosome, positioning it for translation. The chain is Small ribosomal subunit protein uS3 from Bacillus cytotoxicus (strain DSM 22905 / CIP 110041 / 391-98 / NVH 391-98).